Here is a 491-residue protein sequence, read N- to C-terminus: Glutamyl-tRNA(Gln) amidotransferase subunit A (491 aa).

Residues Lys-76 and Ser-154 each act as charge relay system in the active site. The active-site Acyl-ester intermediate is the Ser-178.

It belongs to the amidase family. GatA subfamily. As to quaternary structure, heterotrimer of A, B and C subunits.

The catalysed reaction is L-glutamyl-tRNA(Gln) + L-glutamine + ATP + H2O = L-glutaminyl-tRNA(Gln) + L-glutamate + ADP + phosphate + H(+). Its function is as follows. Allows the formation of correctly charged Gln-tRNA(Gln) through the transamidation of misacylated Glu-tRNA(Gln) in organisms which lack glutaminyl-tRNA synthetase. The reaction takes place in the presence of glutamine and ATP through an activated gamma-phospho-Glu-tRNA(Gln). The protein is Glutamyl-tRNA(Gln) amidotransferase subunit A of Cereibacter sphaeroides (strain ATCC 17029 / ATH 2.4.9) (Rhodobacter sphaeroides).